A 235-amino-acid polypeptide reads, in one-letter code: NAD(P)H-quinone oxidoreductase subunit K (235 aa).

The [4Fe-4S] cluster site is built by cysteine 52, cysteine 53, cysteine 117, and cysteine 148. A compositionally biased stretch (low complexity) spans alanine 216–valine 226. The tract at residues alanine 216–alanine 235 is disordered.

It belongs to the complex I 20 kDa subunit family. As to quaternary structure, NDH-1 can be composed of about 15 different subunits; different subcomplexes with different compositions have been identified which probably have different functions. The cofactor is [4Fe-4S] cluster.

The protein localises to the cellular thylakoid membrane. It catalyses the reaction a plastoquinone + NADH + (n+1) H(+)(in) = a plastoquinol + NAD(+) + n H(+)(out). It carries out the reaction a plastoquinone + NADPH + (n+1) H(+)(in) = a plastoquinol + NADP(+) + n H(+)(out). Its function is as follows. NDH-1 shuttles electrons from an unknown electron donor, via FMN and iron-sulfur (Fe-S) centers, to quinones in the respiratory and/or the photosynthetic chain. The immediate electron acceptor for the enzyme in this species is believed to be plastoquinone. Couples the redox reaction to proton translocation, and thus conserves the redox energy in a proton gradient. Cyanobacterial NDH-1 also plays a role in inorganic carbon-concentration. The polypeptide is NAD(P)H-quinone oxidoreductase subunit K (Synechococcus elongatus (strain ATCC 33912 / PCC 7942 / FACHB-805) (Anacystis nidulans R2)).